Consider the following 641-residue polypeptide: Bifunctional protein glk (641 aa).

Residues 1-340 (MSTGAQTKAA…QLSNRTGGAS (340 aa)) form a glucokinase region. ATP is bound at residue 23 to 28 (ADVGGT). Residues 341–417 (SAVFERIRQM…LKLATGLTGT (77 aa)) form the HTH rpiR-type domain. Positions 341–641 (SAVFERIRQM…SHGAAPAAKD (301 aa)) are putative HTH-type transcriptional regulator. The H-T-H motif DNA-binding region spans 377-396 (IVDIARKADVSQPTVIRFCR). The 140-residue stretch at 461–600 (AIDILNNARR…AVGVAIRRAA (140 aa)) folds into the SIS domain. The chain crosses the membrane as a helical span at residues 576-596 (SMISRILHLVMIDILAVGVAI).

The protein in the N-terminal section; belongs to the bacterial glucokinase family.

The protein localises to the membrane. It carries out the reaction D-glucose + ATP = D-glucose 6-phosphate + ADP + H(+). The protein is Bifunctional protein glk (glk) of Burkholderia pseudomallei (strain 1710b).